The following is a 108-amino-acid chain: MIKTTLLFFATALCEIIGCFLPWLWLKRNASIWLLLPAGISLALFVWLLTLHPAASGRVYAAYGGVYVCTALIWLRVVDGVKLSLYDWTGALIALCGMLIIVAGWGRT.

The Periplasmic segment spans residues 1–5 (MIKTT). The helical transmembrane segment at 6 to 26 (LLFFATALCEIIGCFLPWLWL) threads the bilayer. The Cytoplasmic segment spans residues 27–30 (KRNA). A helical membrane pass occupies residues 31 to 51 (SIWLLLPAGISLALFVWLLTL). Topologically, residues 52–60 (HPAASGRVY) are periplasmic. The chain crosses the membrane as a helical span at residues 61 to 81 (AAYGGVYVCTALIWLRVVDGV). Topologically, residues 82–84 (KLS) are cytoplasmic. The helical transmembrane segment at 85 to 105 (LYDWTGALIALCGMLIIVAGW) threads the bilayer. At 106–108 (GRT) the chain is on the periplasmic side.

The protein belongs to the UPF0060 family.

It is found in the cell inner membrane. This chain is UPF0060 membrane protein YnfA, found in Escherichia coli (strain SMS-3-5 / SECEC).